A 407-amino-acid chain; its full sequence is Expansin-like protein 2 (407 aa).

The signal sequence occupies residues methionine 1 to serine 23. One can recognise an Expansin-like EG45 domain in the interval histidine 42–asparagine 141. 2 disulfides stabilise this stretch: cysteine 45–cysteine 75 and cysteine 78–cysteine 136. N-linked (GlcNAc...) asparagine glycosylation is found at asparagine 70, asparagine 117, and asparagine 387.

Belongs to the expansin family. Expansin A subfamily.

Its subcellular location is the secreted. Unlikely to encode with a protein with expansin activity. In Dictyostelium discoideum (Social amoeba), this protein is Expansin-like protein 2 (expl2).